Consider the following 67-residue polypeptide: MPQLDTSTWFITIISSMITLFILFQLKVSSQTFPLAPSPKSLTTMKVKTPWELKWTKIYLPHSLPQQ.

The helical transmembrane segment at 8–24 threads the bilayer; sequence TWFITIISSMITLFILF. Position 54 is an N6-acetyllysine; alternate (lysine 54). Lysine 54 carries the N6-succinyllysine; alternate modification. Lysine 57 is modified (N6-acetyllysine).

It belongs to the ATPase protein 8 family. As to quaternary structure, component of the ATP synthase complex composed at least of ATP5F1A/subunit alpha, ATP5F1B/subunit beta, ATP5MC1/subunit c (homooctomer), MT-ATP6/subunit a, MT-ATP8/subunit 8, ATP5ME/subunit e, ATP5MF/subunit f, ATP5MG/subunit g, ATP5MK/subunit k, ATP5MJ/subunit j, ATP5F1C/subunit gamma, ATP5F1D/subunit delta, ATP5F1E/subunit epsilon, ATP5PF/subunit F6, ATP5PB/subunit b, ATP5PD/subunit d, ATP5PO/subunit OSCP. ATP synthase complex consists of a soluble F(1) head domain (subunits alpha(3) and beta(3)) - the catalytic core - and a membrane F(0) domain - the membrane proton channel (subunits c, a, 8, e, f, g, k and j). These two domains are linked by a central stalk (subunits gamma, delta, and epsilon) rotating inside the F1 region and a stationary peripheral stalk (subunits F6, b, d, and OSCP). Interacts with PRICKLE3.

It is found in the mitochondrion membrane. Subunit 8, of the mitochondrial membrane ATP synthase complex (F(1)F(0) ATP synthase or Complex V) that produces ATP from ADP in the presence of a proton gradient across the membrane which is generated by electron transport complexes of the respiratory chain. ATP synthase complex consist of a soluble F(1) head domain - the catalytic core - and a membrane F(1) domain - the membrane proton channel. These two domains are linked by a central stalk rotating inside the F(1) region and a stationary peripheral stalk. During catalysis, ATP synthesis in the catalytic domain of F(1) is coupled via a rotary mechanism of the central stalk subunits to proton translocation. In vivo, can only synthesize ATP although its ATP hydrolase activity can be activated artificially in vitro. Part of the complex F(0) domain. In Mus musculus (Mouse), this protein is ATP synthase F(0) complex subunit 8.